A 292-amino-acid chain; its full sequence is Probable starch degradation products transport system permease protein AmyD (292 aa).

A run of 6 helical transmembrane segments spans residues 15 to 35 (WLFIAPTLLSLIIVVLIPFII), 77 to 97 (FAVACIVIINVVGLSLAMLVT), 110 to 130 (FYLPNLIGGLILGFIWNFIFV), 156 to 176 (FWGLVIVTSWQMIGYVMVIYI), 205 to 225 (VFPLIAPAFTVSLFITLSNSF), and 260 to 280 (MAVGQAKAVIMFLIIAVISVI). One can recognise an ABC transmembrane type-1 domain in the interval 71–281 (IIFTAKFAVA…LIIAVISVIQ (211 aa)).

The protein belongs to the binding-protein-dependent transport system permease family. MalFG subfamily.

It is found in the cell membrane. Functionally, probably part of a binding-protein-dependent transport system starch degradation products. Probably responsible for the translocation of the substrate across the membrane. The chain is Probable starch degradation products transport system permease protein AmyD (amyD) from Thermoanaerobacterium thermosulfurigenes (Clostridium thermosulfurogenes).